We begin with the raw amino-acid sequence, 725 residues long: Probable alpha-galactosidase G (725 aa).

N-linked (GlcNAc...) asparagine glycosylation occurs at N407. The Nucleophile role is filled by D484. N-linked (GlcNAc...) asparagine glycosylation is present at N490. D546 serves as the catalytic Proton donor. N-linked (GlcNAc...) asparagine glycosylation is present at N672.

The protein belongs to the glycosyl hydrolase 36 family. Homotetramer. Requires Mg(2+) as cofactor. NAD(+) is required as a cofactor.

It is found in the secreted. It carries out the reaction Hydrolysis of terminal, non-reducing alpha-D-galactose residues in alpha-D-galactosides, including galactose oligosaccharides, galactomannans and galactolipids.. Its function is as follows. Hydrolyzes a variety of simple alpha-D-galactoside as well as more complex molecules such as oligosaccharides and polysaccharides. In Aspergillus terreus (strain NIH 2624 / FGSC A1156), this protein is Probable alpha-galactosidase G (aglG).